We begin with the raw amino-acid sequence, 139 residues long: Prefoldin subunit alpha (139 aa).

The protein belongs to the prefoldin subunit alpha family. As to quaternary structure, heterohexamer of two alpha and four beta subunits.

It is found in the cytoplasm. Its function is as follows. Molecular chaperone capable of stabilizing a range of proteins. Seems to fulfill an ATP-independent, HSP70-like function in archaeal de novo protein folding. The protein is Prefoldin subunit alpha of Picrophilus torridus (strain ATCC 700027 / DSM 9790 / JCM 10055 / NBRC 100828 / KAW 2/3).